The chain runs to 448 residues: Iroquois-class homeodomain protein irx-3 (448 aa).

Positions 108–170 (DPSRPKNATR…NARRRLKKEN (63 aa)) form a DNA-binding region, homeobox; TALE-type. The interval 171 to 247 (KMTWAPRSRT…EVSDGFEDLN (77 aa)) is disordered. Acidic residues predominate over residues 195–222 (KHEDEEEIDLENIDTEDIESKEDLDDPD). Residues 223-237 (TDIHSDSKTDTRSDS) are compositionally biased toward basic and acidic residues. Acidic residues predominate over residues 238–247 (EVSDGFEDLN).

This sequence belongs to the TALE/IRO homeobox family. As to expression, primarily expressed in the developing central nervous system (CNS). At gastrula stage, expressed in both the superficial and deep layers of the presumptive neural plate with expression spreading to the prospective hindbrain, spinal cord and midbrain-hindbrain junction as neurulation proceeds. Not expressed in the anterior neural plate and CNS expression in the tadpole excludes the forebrain. Outside of the CNS, expressed around the closing blastopore at early gastrula stages and as gastrulation proceeds, expression switches to the anterior lateral plate mesoderm. In tadpoles, expressed in the ectodermal layer of the branchial arches, and in the otic vesicle. Also expressed in specific and overlapping dynamic patterns with irx1 and irx2 during pronephric kidney development. Renal expression begins before segment-specific terminal differentiation in the pronephric anlage at mid-neurula stage, and is later found in proximal tubule PT3 as well as intermediate tubule segments IT1 and IT2, with expression in the kidney being maintained through to the tadpole stage.

Its subcellular location is the nucleus. Acts partially redundantly with other irx members in neural patterning. Required for formation of the posterior forebrain, midbrain, hindbrain, and to a lesser extent, spinal cord. Both up-regulates and down-regulates gene expression during neural development. Acts early in neural plate development to induce proneural gene expression and specify a neural precursor state. Also up-regulates repressors that prevent neuronal differentiation. Required during at least two stages of pronephros kidney development; during neurula stages, maintains transcription of key renal genes to define the size and identity of the pronephric anlage, probably in part through regulation of bmp-signaling. Subsequently required for proper formation of the intermediate tubule segment of the pronephros. The polypeptide is Iroquois-class homeodomain protein irx-3 (irx3) (Xenopus laevis (African clawed frog)).